The chain runs to 164 residues: uncharacterized protein (164 aa).

The tract at residues Gly-144–Ala-164 is disordered.

This is an uncharacterized protein from Synechocystis sp. (strain ATCC 27184 / PCC 6803 / Kazusa).